We begin with the raw amino-acid sequence, 413 residues long: MCACKFATYNSNIGAVKLLLDKGADINCMRKDGMSALSAVCKNLDLEFRSDFDTIKLLIERGADVNLTVDGHYTPLMWLIKNLSENDDRFSESKISSIKNLFESDDDDYFFENKRKNKYNALKLLLDNGANIEAKCDGETPLLLACKLSSEITSTKHIKILLKKGAKTNIESNDRKTPLMLLCKNCQQYLENEAVDVLIKYGKANINYQNSIGETALIYLCRISFMSESVQFLLEKGANPNIQDNSGNTALHYAVKRHEFEMVEILLRYNASPEIINKKGKNVFSNMHKISIGVVEQLCRYNINIQLSAAQKYSILQTPSFVNGVKLIGLIESNTKIKTIMDFTINVIPKKVLKIIYHENSLKMKLVKMAWLCRNYSIDKIITMENFWLFDYLNVETIDQLKYKITELTKYES.

ANK repeat units lie at residues 1-28 (MCAC…DINC), 32-67 (DGMS…DVNL), 68-104 (TVDG…LFES), 105-134 (DDDD…NIEA), 137-170 (DGET…KTNI), 174-208 (DRKT…NINY), 212-242 (IGET…NPNI), and 246-275 (SGNT…SPEI).

This chain is Putative ankyrin repeat protein L92, found in Acanthamoeba polyphaga mimivirus (APMV).